Reading from the N-terminus, the 42-residue chain is YLDHGLGAPAPYVDPLEPKREVDELADQMGFQEAYRRFYGTT.

The Gla domain maps to 1–40; it reads YLDHGLGAPAPYVDPLEPKREVDELADQMGFQEAYRRFYG. P9 carries the post-translational modification 4-hydroxyproline. 3 residues coordinate Ca(2+): E17, E21, and D23. A 4-carboxyglutamate mark is found at E17 and E21.

Belongs to the osteocalcin/matrix Gla protein family. Gamma-carboxyglutamic acid residues are formed by vitamin K dependent carboxylation. These residues are essential for the binding of calcium.

Its subcellular location is the secreted. Its function is as follows. The carboxylated form is one of the main organic components of the bone matrix, which constitutes 1-2% of the total bone protein: it acts as a negative regulator of bone formation and is required to limit bone formation without impairing bone resorption or mineralization. The carboxylated form binds strongly to apatite and calcium. The uncarboxylated form acts as a hormone secreted by osteoblasts, which regulates different cellular processes, such as energy metabolism, male fertility and brain development. Regulates of energy metabolism by acting as a hormone favoring pancreatic beta-cell proliferation, insulin secretion and sensitivity and energy expenditure. Uncarboxylated osteocalcin hormone also promotes testosterone production in the testes: acts as a ligand for G protein-coupled receptor GPRC6A at the surface of Leydig cells, initiating a signaling response that promotes the expression of enzymes required for testosterone synthesis in a CREB-dependent manner. Also acts as a regulator of brain development: osteocalcin hormone crosses the blood-brain barrier and acts as a ligand for GPR158 on neurons, initiating a signaling response that prevents neuronal apoptosis in the hippocampus, favors the synthesis of all monoamine neurotransmitters and inhibits that of gamma-aminobutyric acid (GABA). Osteocalcin also crosses the placenta during pregnancy and maternal osteocalcin is required for fetal brain development. The protein is Osteocalcin of Camelops hesternus (Western camel).